An 80-amino-acid chain; its full sequence is Putative membrane protein insertion efficiency factor (80 aa).

It belongs to the UPF0161 family.

Its subcellular location is the cell inner membrane. Could be involved in insertion of integral membrane proteins into the membrane. In Kosmotoga olearia (strain ATCC BAA-1733 / DSM 21960 / TBF 19.5.1), this protein is Putative membrane protein insertion efficiency factor.